Reading from the N-terminus, the 172-residue chain is Large ribosomal subunit protein uL5 (172 aa).

It belongs to the universal ribosomal protein uL5 family. As to quaternary structure, component of the large ribosomal subunit.

The protein resides in the nucleus. It is found in the cytoplasm. Functionally, component of the ribosome, a large ribonucleoprotein complex responsible for the synthesis of proteins in the cell. The small ribosomal subunit (SSU) binds messenger RNAs (mRNAs) and translates the encoded message by selecting cognate aminoacyl-transfer RNA (tRNA) molecules. The large subunit (LSU) contains the ribosomal catalytic site termed the peptidyl transferase center (PTC), which catalyzes the formation of peptide bonds, thereby polymerizing the amino acids delivered by tRNAs into a polypeptide chain. The nascent polypeptides leave the ribosome through a tunnel in the LSU and interact with protein factors that function in enzymatic processing, targeting, and the membrane insertion of nascent chains at the exit of the ribosomal tunnel. This chain is Large ribosomal subunit protein uL5 (RPL11), found in Tetrahymena thermophila.